The sequence spans 159 residues: Na(+)/H(+) antiporter subunit E1 (159 aa).

Helical transmembrane passes span 1-21, 27-47, 49-69, and 101-121; these read MAVQ…VTNS, FVLG…VLPG, FYVI…IELI, and WQIV…VLGV.

It belongs to the CPA3 antiporters (TC 2.A.63) subunit E family. May form a heterooligomeric complex that consists of seven subunits: mnhA1, mnhB1, mnhC1, mnhD1, mnhE1, mnhF1 and mnhG1.

The protein resides in the cell membrane. Its function is as follows. Mnh complex is a Na(+)/H(+) antiporter involved in Na(+) excretion. This Staphylococcus aureus (strain Mu3 / ATCC 700698) protein is Na(+)/H(+) antiporter subunit E1 (mnhE1).